An 85-amino-acid chain; its full sequence is Small ribosomal subunit protein bS16 (85 aa).

It belongs to the bacterial ribosomal protein bS16 family.

The polypeptide is Small ribosomal subunit protein bS16 (Metamycoplasma arthritidis (strain 158L3-1) (Mycoplasma arthritidis)).